Reading from the N-terminus, the 106-residue chain is UPF0145 protein CLH_2273 (106 aa).

This sequence belongs to the UPF0145 family.

This is UPF0145 protein CLH_2273 from Clostridium botulinum (strain Alaska E43 / Type E3).